The chain runs to 61 residues: Furostanol glycoside 26-O-beta-glucosidase (61 aa).

The Proton donor/acceptor role is filled by D33. D33 contacts D-glucose.

It belongs to the glycosyl hydrolase 3 family. As to quaternary structure, monomer. In terms of processing, glycosylated. Expressed in petioles and leaves, but not in fruits.

It catalyses the reaction protodioscin + H2O = 26-deglucoprotodioscin + D-glucose. With respect to regulation, inhibited by Hg(2+) and D-glucono-1,5-lactone. Beta-glucosidase highly specific for the cleavage of C-26-bound glucose moiety of furostanol glycosides torvosides A and H. Hydrolyzes only p-nitrophenyl-beta-glucoside, but not p-nitrophenyl-beta-D-fucoside, p-nitrophenyl-beta-L-fucoside, p-nitrophenyl-beta-D-xyloside, p-nitrophenyl-beta-D-galactoside, p-nitrophenyl-beta-D-NAc-glucosamine, p-nitrophenyl-beta-D-mannoside or any of the p-nitrophenyl-alpha-glycosides tested. This is Furostanol glycoside 26-O-beta-glucosidase from Solanum torvum (Turkey berry).